The chain runs to 271 residues: ABC transporter I family member 10 (271 aa).

In terms of domain architecture, ABC transporter spans 40-267 (VECRNLCFSV…IKAKQSSYID (228 aa)). ATP is bound at residue 77-84 (GPNGCGKS).

The protein belongs to the ABC transporter superfamily. ABCI family.

In Arabidopsis thaliana (Mouse-ear cress), this protein is ABC transporter I family member 10 (ABCI10).